A 308-amino-acid polypeptide reads, in one-letter code: RING-H2 finger protein ATL63 (308 aa).

A helical membrane pass occupies residues 29–49; that stretch reads VLLAALVFLLLVVLFVLLLHF. The segment at 138 to 180 adopts an RING-type; atypical zinc-finger fold; that stretch reads CVICLGLWEAGDFGRKLRNCGHGFHVECIDMWLSSHSTCPLCR. Residues 252-308 are disordered; that stretch reads VFDDDEEINDGGTRSDRRRSMSMTSSASSSLMRMLSSSSSRSERNKVFPTARQDSSK. Over residues 272–291 the composition is skewed to low complexity; it reads MSMTSSASSSLMRMLSSSSS.

Belongs to the RING-type zinc finger family. ATL subfamily.

The protein resides in the membrane. The catalysed reaction is S-ubiquitinyl-[E2 ubiquitin-conjugating enzyme]-L-cysteine + [acceptor protein]-L-lysine = [E2 ubiquitin-conjugating enzyme]-L-cysteine + N(6)-ubiquitinyl-[acceptor protein]-L-lysine.. The protein operates within protein modification; protein ubiquitination. The chain is RING-H2 finger protein ATL63 (ATL63) from Arabidopsis thaliana (Mouse-ear cress).